Here is a 152-residue protein sequence, read N- to C-terminus: Regulator of G-protein signaling 21 (152 aa).

The RGS domain occupies 21 to 137 (NMDTLLANQA…LKSEIYKKLV (117 aa)).

In terms of tissue distribution, expressed ubiquitously.

Its function is as follows. Inhibits signal transduction by increasing the GTPase activity of G protein alpha subunits thereby driving them into their inactive GDP-bound form. This chain is Regulator of G-protein signaling 21 (RGS21), found in Homo sapiens (Human).